A 748-amino-acid chain; its full sequence is EF-hand domain-containing family member C2 (748 aa).

3 consecutive DM10 domains span residues 75–182 (DKQV…VKMG), 226–366 (DRQV…RSKY), and 428–535 (VSNV…EQHA). 2 consecutive EF-hand domains span residues 556–591 (EQQK…LDVE) and 631–666 (EKFS…FRLP).

It localises to the cytoplasm. Its subcellular location is the cytoskeleton. The protein resides in the cilium axoneme. Microtubule inner protein (MIP) part of the dynein-decorated doublet microtubules (DMTs) in cilia axoneme, which is required for motile cilia beating. This is EF-hand domain-containing family member C2 (efhc2) from Danio rerio (Zebrafish).